A 203-amino-acid chain; its full sequence is Small ribosomal subunit protein uS4 (203 aa).

A disordered region spans residues 20 to 45 (LPGLTRKRPKNTNPPGMHGAERKKKS). The 64-residue stretch at 92-155 (MRLDCIVFRL…SSRKLVAAYA (64 aa)) folds into the S4 RNA-binding domain.

It belongs to the universal ribosomal protein uS4 family. Part of the 30S ribosomal subunit. Contacts protein S5. The interaction surface between S4 and S5 is involved in control of translational fidelity.

Functionally, one of the primary rRNA binding proteins, it binds directly to 16S rRNA where it nucleates assembly of the body of the 30S subunit. In terms of biological role, with S5 and S12 plays an important role in translational accuracy. The chain is Small ribosomal subunit protein uS4 from Synechococcus sp. (strain JA-3-3Ab) (Cyanobacteria bacterium Yellowstone A-Prime).